The chain runs to 223 residues: Acetate CoA-transferase subunit beta (223 aa).

Glu-46 is a catalytic residue.

This sequence belongs to the 3-oxoacid CoA-transferase subunit B family. In terms of assembly, heterotetramer composed of two alpha subunits (AtoD) and two beta subunits (AtoA).

The catalysed reaction is an acyl-CoA + acetate = a carboxylate + acetyl-CoA. It catalyses the reaction acetoacetate + acetyl-CoA = acetoacetyl-CoA + acetate. Its pathway is lipid metabolism; short-chain fatty acid metabolism. Functionally, coenzyme A transferase which is involved in short-chain fatty acid degradation and catalyzes the activation of short-chain fatty acids to their respective CoA thiolesters. In Haemophilus influenzae (strain ATCC 51907 / DSM 11121 / KW20 / Rd), this protein is Acetate CoA-transferase subunit beta (atoA).